A 292-amino-acid polypeptide reads, in one-letter code: D-tagatose-1,6-bisphosphate aldolase subunit KbaY (292 aa).

Asp-82 (proton donor) is an active-site residue. Residues His-83 and His-180 each contribute to the Zn(2+) site. Gly-181 is a binding site for dihydroxyacetone phosphate. Residue His-208 coordinates Zn(2+). Dihydroxyacetone phosphate contacts are provided by residues 209–211 (GAS) and 230–233 (NVAT).

This sequence belongs to the class II fructose-bisphosphate aldolase family. TagBP aldolase KbaY subfamily. As to quaternary structure, homotetramer. Forms a complex with KbaZ. Zn(2+) serves as cofactor.

It carries out the reaction D-tagatofuranose 1,6-bisphosphate = D-glyceraldehyde 3-phosphate + dihydroxyacetone phosphate. The protein operates within carbohydrate metabolism; D-tagatose 6-phosphate degradation; D-glyceraldehyde 3-phosphate and glycerone phosphate from D-tagatose 6-phosphate: step 2/2. In terms of biological role, catalytic subunit of the tagatose-1,6-bisphosphate aldolase KbaYZ, which catalyzes the reversible aldol condensation of dihydroxyacetone phosphate (DHAP or glycerone-phosphate) with glyceraldehyde 3-phosphate (G3P) to produce tagatose 1,6-bisphosphate (TBP). Requires KbaZ subunit for full activity and stability. The chain is D-tagatose-1,6-bisphosphate aldolase subunit KbaY from Enterobacter sp. (strain 638).